The chain runs to 148 residues: Putative pre-16S rRNA nuclease (148 aa).

This sequence belongs to the YqgF nuclease family.

The protein localises to the cytoplasm. In terms of biological role, could be a nuclease involved in processing of the 5'-end of pre-16S rRNA. This Nitrosomonas europaea (strain ATCC 19718 / CIP 103999 / KCTC 2705 / NBRC 14298) protein is Putative pre-16S rRNA nuclease.